A 288-amino-acid chain; its full sequence is Bifunctional protein FolD (288 aa).

Residues 166–168 (GAS) and Ile232 contribute to the NADP(+) site.

It belongs to the tetrahydrofolate dehydrogenase/cyclohydrolase family. In terms of assembly, homodimer.

The catalysed reaction is (6R)-5,10-methylene-5,6,7,8-tetrahydrofolate + NADP(+) = (6R)-5,10-methenyltetrahydrofolate + NADPH. The enzyme catalyses (6R)-5,10-methenyltetrahydrofolate + H2O = (6R)-10-formyltetrahydrofolate + H(+). It functions in the pathway one-carbon metabolism; tetrahydrofolate interconversion. In terms of biological role, catalyzes the oxidation of 5,10-methylenetetrahydrofolate to 5,10-methenyltetrahydrofolate and then the hydrolysis of 5,10-methenyltetrahydrofolate to 10-formyltetrahydrofolate. This is Bifunctional protein FolD from Klebsiella pneumoniae (strain 342).